We begin with the raw amino-acid sequence, 245 residues long: Acetylglutamate kinase (245 aa).

Residues 41 to 42 (GG), Arg-63, and Asn-156 contribute to the substrate site.

This sequence belongs to the acetylglutamate kinase family. ArgB subfamily.

The protein resides in the cytoplasm. The catalysed reaction is N-acetyl-L-glutamate + ATP = N-acetyl-L-glutamyl 5-phosphate + ADP. It participates in amino-acid biosynthesis; L-arginine biosynthesis; N(2)-acetyl-L-ornithine from L-glutamate: step 2/4. Catalyzes the ATP-dependent phosphorylation of N-acetyl-L-glutamate. The polypeptide is Acetylglutamate kinase (Streptococcus gordonii (strain Challis / ATCC 35105 / BCRC 15272 / CH1 / DL1 / V288)).